We begin with the raw amino-acid sequence, 1084 residues long: Teashirt homolog 1 (1084 aa).

3 disordered regions span residues 49 to 108 (EETE…SVSY), 140 to 167 (NSATSNNDASQKESSTPTPTPPTSTAST), and 269 to 298 (GHYRDDNRDKDSEKTKRWSKPRKRSLMEME). Composition is skewed to polar residues over residues 57–71 (QSYQNSPVSTATNQD) and 140–152 (NSATSNNDASQKE). 2 consecutive C2H2-type zinc fingers follow at residues 246 to 270 (FRCKDCSAAYDTLVELTVHMNETGH) and 307 to 331 (LKCMYCGHSFESLQDLSVHMIKTKH). A compositionally biased stretch (basic and acidic residues) spans 269-284 (GHYRDDNRDKDSEKTK). The C2H2-type 3; atypical zinc-finger motif lies at 416–440 (LKCMECGSSHDTLQQLTAHMMVTGH). 2 disordered regions span residues 467–534 (SIPL…EKFE) and 653–728 (TGKV…LKAK). Basic and acidic residues-rich tracts occupy residues 496–534 (SEEKKEPEKEKEKEKAPPAAGDAERKIKEETEDATEKFE), 653–671 (TGKVSIKKEERPTEKEKSS), and 681–714 (KENKDLPKTEETGSKPQKKGSDSETGKAKKESTL). Serine 771 is modified (phosphoserine). The segment at 855–879 (GRLTPKSSTPSTVSEKSDADGSSFE) is disordered. The span at 859–868 (PKSSTPSTVS) shows a compositional bias: polar residues. Positions 891-961 (RKGRQSNWNP…NVKYQLRRTG (71 aa)) form a DNA-binding region, homeobox; atypical. 2 C2H2-type zinc fingers span residues 976 to 998 (FFCNDCASQFRTASTYVSHLETH) and 1044 to 1067 (FQCKLCNRTFASKHAVKLHLSKTH).

The protein belongs to the teashirt C2H2-type zinc-finger protein family. As to quaternary structure, interacts (via homeobox domain) with APBB1 (via PID domain 1).

Its subcellular location is the nucleus. Probable transcriptional regulator involved in developmental processes. May act as a transcriptional repressor (Potential). The sequence is that of Teashirt homolog 1 (Tshz1) from Mus musculus (Mouse).